The chain runs to 176 residues: 3-hydroxydecanoyl-[acyl-carrier-protein] dehydratase (176 aa).

The active site involves His-70.

Belongs to the thioester dehydratase family. FabA subfamily. As to quaternary structure, homodimer.

It localises to the cytoplasm. It carries out the reaction a (3R)-hydroxyacyl-[ACP] = a (2E)-enoyl-[ACP] + H2O. The enzyme catalyses (3R)-hydroxydecanoyl-[ACP] = (2E)-decenoyl-[ACP] + H2O. The catalysed reaction is (2E)-decenoyl-[ACP] = (3Z)-decenoyl-[ACP]. The protein operates within lipid metabolism; fatty acid biosynthesis. Necessary for the introduction of cis unsaturation into fatty acids. Catalyzes the dehydration of (3R)-3-hydroxydecanoyl-ACP to E-(2)-decenoyl-ACP and then its isomerization to Z-(3)-decenoyl-ACP. Can catalyze the dehydratase reaction for beta-hydroxyacyl-ACPs with saturated chain lengths up to 16:0, being most active on intermediate chain length. In Alkalilimnicola ehrlichii (strain ATCC BAA-1101 / DSM 17681 / MLHE-1), this protein is 3-hydroxydecanoyl-[acyl-carrier-protein] dehydratase.